Consider the following 479-residue polypeptide: Ribosomal RNA small subunit methyltransferase F (479 aa).

S-adenosyl-L-methionine-binding positions include 125-131 (AAAPGSK), E149, D176, and D194. C247 functions as the Nucleophile in the catalytic mechanism.

This sequence belongs to the class I-like SAM-binding methyltransferase superfamily. RsmB/NOP family.

Its subcellular location is the cytoplasm. It carries out the reaction cytidine(1407) in 16S rRNA + S-adenosyl-L-methionine = 5-methylcytidine(1407) in 16S rRNA + S-adenosyl-L-homocysteine + H(+). In terms of biological role, specifically methylates the cytosine at position 1407 (m5C1407) of 16S rRNA. This is Ribosomal RNA small subunit methyltransferase F from Citrobacter koseri (strain ATCC BAA-895 / CDC 4225-83 / SGSC4696).